Consider the following 364-residue polypeptide: tRNA N6-adenosine threonylcarbamoyltransferase (364 aa).

The Fe cation site is built by His115 and His119. Substrate contacts are provided by residues 137 to 141 (LVSGG), Asp170, Gly183, and Asn288. Asp316 contacts Fe cation.

Belongs to the KAE1 / TsaD family. Fe(2+) serves as cofactor.

The protein localises to the cytoplasm. It catalyses the reaction L-threonylcarbamoyladenylate + adenosine(37) in tRNA = N(6)-L-threonylcarbamoyladenosine(37) in tRNA + AMP + H(+). Functionally, required for the formation of a threonylcarbamoyl group on adenosine at position 37 (t(6)A37) in tRNAs that read codons beginning with adenine. Is involved in the transfer of the threonylcarbamoyl moiety of threonylcarbamoyl-AMP (TC-AMP) to the N6 group of A37, together with TsaE and TsaB. TsaD likely plays a direct catalytic role in this reaction. This is tRNA N6-adenosine threonylcarbamoyltransferase from Bartonella tribocorum (strain CIP 105476 / IBS 506).